Consider the following 123-residue polypeptide: Small ribosomal subunit protein uS12 (123 aa).

Residues 1–26 form a disordered region; it reads MPTINQLVRKPRKSRSSLNKAPALQH. Position 90 is a 3-methylthioaspartic acid (D90).

This sequence belongs to the universal ribosomal protein uS12 family. In terms of assembly, part of the 30S ribosomal subunit. Contacts proteins S8 and S17. May interact with IF1 in the 30S initiation complex.

In terms of biological role, with S4 and S5 plays an important role in translational accuracy. Functionally, interacts with and stabilizes bases of the 16S rRNA that are involved in tRNA selection in the A site and with the mRNA backbone. Located at the interface of the 30S and 50S subunits, it traverses the body of the 30S subunit contacting proteins on the other side and probably holding the rRNA structure together. The combined cluster of proteins S8, S12 and S17 appears to hold together the shoulder and platform of the 30S subunit. The protein is Small ribosomal subunit protein uS12 of Ehrlichia chaffeensis (strain ATCC CRL-10679 / Arkansas).